The chain runs to 129 residues: Large ribosomal subunit protein bL32m (129 aa).

Residues 1 to 63 constitute a mitochondrion transit peptide; the sequence is MAAMTAAAAA…LEDIWEGILR (63 aa). 4 residues coordinate Zn(2+): Cys-94, Cys-97, Cys-107, and Cys-110.

Belongs to the bacterial ribosomal protein bL32 family. In terms of assembly, component of the mitochondrial large ribosomal subunit (mt-LSU). Mature N.crassa 74S mitochondrial ribosomes consist of a small (37S) and a large (54S) subunit. The 37S small subunit contains a 16S ribosomal RNA (16S mt-rRNA) and 32 different proteins. The 54S large subunit contains a 23S rRNA (23S mt-rRNA) and 42 different proteins. bL32m has a zinc binding site. In terms of processing, MRPL32 precursor is processed by the m-AAA protease (composed of YTA12/RCA1 and YTA10/AFG3), which cleaves the N-terminal transit peptide. Cleavage by the m-AAA protease takes place prior to assembly into the large subunit, an essential step for mitochondrial ribosome (mitoribosome) assembly. Proper processing by the m-AAA protease is dependent on the zinc-binding region within the tightly folded C-terminal domain of MRPL32: zinc-dependent folding halts degradation initiated from the N-terminus and triggers the release of mature MRPL32.

The protein localises to the mitochondrion. Component of the mitochondrial ribosome (mitoribosome), a dedicated translation machinery responsible for the synthesis of mitochondrial genome-encoded proteins, including at least some of the essential transmembrane subunits of the mitochondrial respiratory chain. The mitoribosomes are attached to the mitochondrial inner membrane and translation products are cotranslationally integrated into the membrane. In Neurospora crassa (strain ATCC 24698 / 74-OR23-1A / CBS 708.71 / DSM 1257 / FGSC 987), this protein is Large ribosomal subunit protein bL32m (mrpl32).